The chain runs to 154 residues: Fibroblast growth factor 2 (154 aa).

Positions 1–9 (MAAGSITSL) are excised as a propeptide. A disordered region spans residues 1–20 (MAAGSITSLPALPEDGGGAF). Position 35 (N35) interacts with heparin. A Phosphotyrosine; by TEC modification is found at Y81. K94 is covalently cross-linked (Glycyl lysine isopeptide (Lys-Gly) (interchain with G-Cter in SUMO1)). The heparin-binding stretch occupies residues 127 to 143 (KRTGQYKLGSKTGPGQK).

Belongs to the heparin-binding growth factors family. Monomer. Homodimer. Interacts with FGFR1, FGFR2, FGFR3 and FGFR4. Affinity between fibroblast growth factors (FGFs) and their receptors is increased by heparan sulfate glycosaminoglycans that function as coreceptors. Interacts with CSPG4, FGFBP1 and TEC. Found in a complex with FGFBP1, FGF1 and FGF2. Interacts with FGFBP3. Interacts with integrin ITGAV:ITGB3; the interaction is required for FGF2 signaling. Interacts with SNORC (via the extracellular domain). Interacts with GPC3. In terms of processing, phosphorylation at Tyr-81 regulates FGF2 unconventional secretion. In terms of tissue distribution, found in all tissues examined.

The protein resides in the secreted. Its subcellular location is the nucleus. In terms of biological role, acts as a ligand for FGFR1, FGFR2, FGFR3 and FGFR4. Also acts as an integrin ligand which is required for FGF2 signaling. Binds to integrin ITGAV:ITGB3. Plays an important role in the regulation of cell survival, cell division, cell differentiation and cell migration. Functions as a potent mitogen in vitro. Can induce angiogenesis. Mediates phosphorylation of ERK1/2 and thereby promotes retinal lens fiber differentiation. This is Fibroblast growth factor 2 (Fgf2) from Rattus norvegicus (Rat).